The chain runs to 35 residues: Hemocyanin A chain (35 aa).

This sequence belongs to the tyrosinase family. Hemocyanin subfamily. In terms of tissue distribution, hemolymph.

The protein localises to the secreted. The protein resides in the extracellular space. In terms of biological role, hemocyanins are copper-containing oxygen carriers occurring freely dissolved in the hemolymph of many mollusks and arthropods. The chain is Hemocyanin A chain from Cherax destructor (Common yabby crayfish).